The sequence spans 316 residues: Mitochondrial GTPase 1 (316 aa).

The 176-residue stretch at 28 to 203 (MKQMQQKLKQ…LLDTPGILKP (176 aa)) folds into the CP-type G domain. GTP-binding positions include 73–76 (NKKD), 147–152 (NVGKSS), and G199.

Belongs to the TRAFAC class YlqF/YawG GTPase family. MTG1 subfamily.

It is found in the mitochondrion inner membrane. In terms of biological role, plays a role in the regulation of the mitochondrial ribosome assembly and of translational activity. Displays mitochondrial GTPase activity. The polypeptide is Mitochondrial GTPase 1 (Aedes aegypti (Yellowfever mosquito)).